The following is a 277-amino-acid chain: Probable cyclic nucleotide phosphodiesterase MCR_0369 (277 aa).

7 residues coordinate Fe cation: Asp17, His19, Asp53, Asn83, His165, His204, and His206. Residues His19, Asp53, and 83–84 (NH) contribute to the AMP site. His206 serves as a coordination point for AMP.

The protein belongs to the cyclic nucleotide phosphodiesterase class-III family. Fe(2+) is required as a cofactor.

The protein is Probable cyclic nucleotide phosphodiesterase MCR_0369 of Moraxella catarrhalis (strain BBH18).